Reading from the N-terminus, the 203-residue chain is RNA annealing protein YRA2 (203 aa).

Met1 carries the N-acetylmethionine modification. 2 disordered regions span residues Met1–Pro60 and Gln137–Gly203. Residues Asn11–His20 show a composition bias toward polar residues. The segment covering Ser47–Pro60 has biased composition (basic and acidic residues). An RRM domain is found at Lys64 to Pro138. Basic residues-rich tracts occupy residues Gln139–Gln153 and Gly161–Gly180.

It belongs to the YRA1 family. In terms of assembly, associates with mRNPs. Interacts with YRA1.

It localises to the nucleus. In terms of biological role, involved in export of poly(A) mRNAs from the nucleus. Recruited to the coding sequences as well as poly-A sites of active genes. The protein is RNA annealing protein YRA2 (YRA2) of Saccharomyces cerevisiae (strain JAY291) (Baker's yeast).